The primary structure comprises 518 residues: E3 ubiquitin-protein ligase TRIM39 (518 aa).

An RING-type zinc finger spans residues 29–70 (CSVCLEYLKEPVIIECGHNFCKACITRWWEDLERDFPCPVCR). The B box-type zinc finger occupies 102–143 (RDESLCPQHHEALSLFCYEDQEAVCLICAISHTHRAHTVVPL). Zn(2+) contacts are provided by Cys107, His110, Cys129, and His135. Residues 181–250 (ELKRLVESRR…AHLAAEVEGK (70 aa)) adopt a coiled-coil conformation. Interaction with CDKN1A regions lie at residues 268–337 (KNIP…QLIA) and 389–518 (TSGR…TDWE). Residues 319–514 (SNFPRQYFAL…NAAPLTIRPP (196 aa)) enclose the B30.2/SPRY domain.

Belongs to the TRIM/RBCC family. Interacts with MOAP1. Interacts with CDKN1A. Autoubiquitinated.

It localises to the cytoplasm. Its subcellular location is the cytosol. The protein resides in the mitochondrion. The protein localises to the nucleus. It catalyses the reaction S-ubiquitinyl-[E2 ubiquitin-conjugating enzyme]-L-cysteine + [acceptor protein]-L-lysine = [E2 ubiquitin-conjugating enzyme]-L-cysteine + N(6)-ubiquitinyl-[acceptor protein]-L-lysine.. It functions in the pathway protein modification; protein ubiquitination. Its function is as follows. E3 ubiquitin-protein ligase. May facilitate apoptosis by inhibiting APC/C-Cdh1-mediated poly-ubiquitination and subsequent proteasome-mediated degradation of the pro-apoptotic protein MOAP1. Regulates the G1/S transition of the cell cycle and DNA damage-induced G2 arrest by stabilizing CDKN1A/p21. Positively regulates CDKN1A/p21 stability by competing with DTL for CDKN1A/p21 binding, therefore disrupting DCX(DTL) E3 ubiquitin ligase complex-mediated CDKN1A/p21 ubiquitination and degradation. The chain is E3 ubiquitin-protein ligase TRIM39 (TRIM39) from Pan troglodytes (Chimpanzee).